Reading from the N-terminus, the 261-residue chain is Kallikrein-2 (261 aa).

An N-terminal signal peptide occupies residues 1–18 (MWDLVLSIALSVGCTGAV). Residues 19–24 (PLIQSR) constitute a propeptide, activation peptide. The Peptidase S1 domain maps to 25 to 258 (IVGGWECEKH…YRKWIKDTIA (234 aa)). Cystine bridges form between cysteine 31–cysteine 173, cysteine 50–cysteine 66, cysteine 152–cysteine 219, cysteine 184–cysteine 198, and cysteine 209–cysteine 234. Histidine 65 acts as the Charge relay system in catalysis. A glycan (N-linked (GlcNAc...) asparagine) is linked at asparagine 102. Residue aspartate 120 is the Charge relay system of the active site. Serine 213 functions as the Charge relay system in the catalytic mechanism.

This sequence belongs to the peptidase S1 family. Kallikrein subfamily.

The catalysed reaction is Preferential cleavage of Arg-|-Xaa bonds in small molecule substrates. Highly selective action to release kallidin (lysyl-bradykinin) from kininogen involves hydrolysis of Met-|-Xaa or Leu-|-Xaa.. In terms of biological role, glandular kallikreins cleave Met-Lys and Arg-Ser bonds in kininogen to release Lys-bradykinin. The chain is Kallikrein-2 (KLK2) from Homo sapiens (Human).